We begin with the raw amino-acid sequence, 313 residues long: Ribose-phosphate pyrophosphokinase (313 aa).

ATP contacts are provided by residues 40–42 and 98–99; these read DGE and RQ. 2 residues coordinate Mg(2+): histidine 132 and aspartate 172. The active site involves lysine 195. D-ribose 5-phosphate is bound by residues arginine 197, aspartate 221, and 225 to 229; that span reads DTAGT.

This sequence belongs to the ribose-phosphate pyrophosphokinase family. Class I subfamily. As to quaternary structure, homohexamer. It depends on Mg(2+) as a cofactor.

The protein resides in the cytoplasm. The enzyme catalyses D-ribose 5-phosphate + ATP = 5-phospho-alpha-D-ribose 1-diphosphate + AMP + H(+). The protein operates within metabolic intermediate biosynthesis; 5-phospho-alpha-D-ribose 1-diphosphate biosynthesis; 5-phospho-alpha-D-ribose 1-diphosphate from D-ribose 5-phosphate (route I): step 1/1. Functionally, involved in the biosynthesis of the central metabolite phospho-alpha-D-ribosyl-1-pyrophosphate (PRPP) via the transfer of pyrophosphoryl group from ATP to 1-hydroxyl of ribose-5-phosphate (Rib-5-P). The polypeptide is Ribose-phosphate pyrophosphokinase (Porphyromonas gingivalis (strain ATCC BAA-308 / W83)).